The chain runs to 212 residues: Maleylacetoacetate isomerase (212 aa).

The GST N-terminal domain occupies 1–83; sequence MKLYTYYRST…YLEERYPQPA (83 aa). A GST C-terminal domain is found at 88 to 211; that stretch reads DPLRRARERG…HPANQPDTPA (124 aa).

The protein belongs to the GST superfamily. Zeta family.

It carries out the reaction 4-maleylacetoacetate = 4-fumarylacetoacetate. Its pathway is amino-acid degradation; L-phenylalanine degradation; acetoacetate and fumarate from L-phenylalanine: step 5/6. The sequence is that of Maleylacetoacetate isomerase (maiA) from Pseudomonas aeruginosa (strain ATCC 15692 / DSM 22644 / CIP 104116 / JCM 14847 / LMG 12228 / 1C / PRS 101 / PAO1).